The chain runs to 133 residues: Putative pre-16S rRNA nuclease (133 aa).

The protein belongs to the YqgF nuclease family.

It is found in the cytoplasm. In terms of biological role, could be a nuclease involved in processing of the 5'-end of pre-16S rRNA. This is Putative pre-16S rRNA nuclease from Bordetella pertussis (strain Tohama I / ATCC BAA-589 / NCTC 13251).